The following is a 370-amino-acid chain: Accessory Sec system protein translocase subunit SecY2 (370 aa).

Transmembrane regions (helical) follow at residues 17 to 37 (IIFT…PAIT), 65 to 85 (VFSL…LFYY), 105 to 125 (IFTL…LLSH), 134 to 154 (WLII…SDLN), 155 to 175 (MRFG…RSIM), 188 to 208 (LLIS…FIEI), 240 to 260 (IAIM…NLIV), 276 to 296 (FSTP…SYGI), and 339 to 359 (WIGA…TLLI).

Belongs to the SecY/SEC61-alpha family. SecY2 subfamily. In terms of assembly, component of the accessory SecA2/SecY2 protein translocase complex required to export cell wall proteins. May form heterotrimers with SecE and SecG subunits.

It localises to the cell membrane. In terms of biological role, part of the accessory SecA2/SecY2 system specifically required for export of possible cell wall proteins. The central subunit of a protein translocation channel. The polypeptide is Accessory Sec system protein translocase subunit SecY2 (Staphylococcus carnosus (strain TM300)).